The chain runs to 596 residues: UvrABC system protein C (596 aa).

Residues 16 to 95 form the GIY-YIG domain; the sequence is SSPGVYRFYS…IKENKPKYNV (80 aa). Residues 209–244 form the UVR domain; that stretch reads SSVKKYYQEKMLSAAEDMQFEKAQFFKERYNSVLGL.

The protein belongs to the UvrC family. In terms of assembly, interacts with UvrB in an incision complex.

The protein resides in the cytoplasm. In terms of biological role, the UvrABC repair system catalyzes the recognition and processing of DNA lesions. UvrC both incises the 5' and 3' sides of the lesion. The N-terminal half is responsible for the 3' incision and the C-terminal half is responsible for the 5' incision. The polypeptide is UvrABC system protein C (Cytophaga hutchinsonii (strain ATCC 33406 / DSM 1761 / CIP 103989 / NBRC 15051 / NCIMB 9469 / D465)).